Consider the following 591-residue polypeptide: Aspartate--tRNA ligase (591 aa).

E171 is an L-aspartate binding site. The segment at 195–198 is aspartate; the sequence is QLFK. R217 contributes to the L-aspartate binding site. ATP is bound by residues 217 to 219 and Q226; that span reads RDE. H448 serves as a coordination point for L-aspartate. ATP is bound at residue E482. R489 lines the L-aspartate pocket. An ATP-binding site is contributed by 534–537; sequence GLDR.

This sequence belongs to the class-II aminoacyl-tRNA synthetase family. Type 1 subfamily. In terms of assembly, homodimer.

The protein resides in the cytoplasm. The catalysed reaction is tRNA(Asp) + L-aspartate + ATP = L-aspartyl-tRNA(Asp) + AMP + diphosphate. Functionally, catalyzes the attachment of L-aspartate to tRNA(Asp) in a two-step reaction: L-aspartate is first activated by ATP to form Asp-AMP and then transferred to the acceptor end of tRNA(Asp). The sequence is that of Aspartate--tRNA ligase from Edwardsiella ictaluri (strain 93-146).